Here is a 348-residue protein sequence, read N- to C-terminus: Sesquiterpene synthase MGU_11447 (348 aa).

Residues Asp91 and Asp96 each contribute to the Mg(2+) site. Positions 91-96 (DDLFVD) match the DDXXXD motif motif. Arg184 is a binding site for substrate. Positions 230, 234, and 238 each coordinate Mg(2+).

Belongs to the terpene synthase family. Requires Mg(2+) as cofactor.

It catalyses the reaction (2E,6E)-farnesyl diphosphate + H2O = (+)-corvol ether B + diphosphate. The catalysed reaction is (2E,6E)-farnesyl diphosphate + H2O = (+)-corvol ether A + diphosphate. Functionally, terpene synthase that catalyzes the conversion of (2E,6E)-farnesyl diphosphate (FPP) into sesquiterpenes which are important for fungi-environment interactions. Produces a mixture consisting of 8 sesquiterpenes including corvol ethers A and B, as well as traces of epizonarene, gamma-cadinene, delta-cadinene, alpha-cadinene, alpha-cadinol, and an unidentified sesquiterpene. Produces both corvol ether A and corvol ether B in similar concentrations. The protein is Sesquiterpene synthase MGU_11447 of Metarhizium guizhouense (strain ARSEF 977).